Here is a 149-residue protein sequence, read N- to C-terminus: Transcriptional repressor NrdR (149 aa).

A zinc finger spans residues 3–34 (CPFCSATDTKVIDSRLVSDGHQVRRRRQCLAC). The ATP-cone domain maps to 49–139 (PKVIKSNGNR…VYRSFEDIKE (91 aa)).

This sequence belongs to the NrdR family. Zn(2+) is required as a cofactor.

In terms of biological role, negatively regulates transcription of bacterial ribonucleotide reductase nrd genes and operons by binding to NrdR-boxes. In Aliivibrio fischeri (strain ATCC 700601 / ES114) (Vibrio fischeri), this protein is Transcriptional repressor NrdR.